A 196-amino-acid polypeptide reads, in one-letter code: Imidazoleglycerol-phosphate dehydratase (196 aa).

Belongs to the imidazoleglycerol-phosphate dehydratase family.

The protein localises to the cytoplasm. It catalyses the reaction D-erythro-1-(imidazol-4-yl)glycerol 3-phosphate = 3-(imidazol-4-yl)-2-oxopropyl phosphate + H2O. The protein operates within amino-acid biosynthesis; L-histidine biosynthesis; L-histidine from 5-phospho-alpha-D-ribose 1-diphosphate: step 6/9. The chain is Imidazoleglycerol-phosphate dehydratase from Solidesulfovibrio magneticus (strain ATCC 700980 / DSM 13731 / RS-1) (Desulfovibrio magneticus).